A 391-amino-acid chain; its full sequence is MYCIGLMSGTSVDGIDAALVNISGKDLDLHIELIAGATYPYPPALREKIIAVSEGVSLSMVELAQLDDAIATQFALAAQKIQKGHPQAELIGSHGQTIYHRPPKIKRGEFSQTDLGYSLQLGRGEVITDLTGIPTVSKFRIADIAAGGQGAPLVPKVDAYLLSHPTQTRCIQNIGGIGNVTYLPPRNQENWESHVYGWDTGPGNVLIDLAVQKLTNGQKTYDENGEWAAQGKPSQDLVTKWLQYDFFYQAPPKSTGRELFGHEYLDKCWTDAIALQLPPEDFLASLVELTVASIIHNYRAFLPQMPQAVLLCGGGSHNLYLKQRLQENLGHQSQVLTTDEVGINGDYKEAITFAVLAYWRKICSFPGNLPQVTGASKPMLLGDIHLPISQI.

An ATP-binding site is contributed by 9-16 (GTSVDGID).

It belongs to the anhydro-N-acetylmuramic acid kinase family.

It catalyses the reaction 1,6-anhydro-N-acetyl-beta-muramate + ATP + H2O = N-acetyl-D-muramate 6-phosphate + ADP + H(+). The protein operates within amino-sugar metabolism; 1,6-anhydro-N-acetylmuramate degradation. It functions in the pathway cell wall biogenesis; peptidoglycan recycling. Functionally, catalyzes the specific phosphorylation of 1,6-anhydro-N-acetylmuramic acid (anhMurNAc) with the simultaneous cleavage of the 1,6-anhydro ring, generating MurNAc-6-P. Is required for the utilization of anhMurNAc either imported from the medium or derived from its own cell wall murein, and thus plays a role in cell wall recycling. The polypeptide is Anhydro-N-acetylmuramic acid kinase (Gloeothece citriformis (strain PCC 7424) (Cyanothece sp. (strain PCC 7424))).